The following is a 932-amino-acid chain: Protein translocase subunit SecA (932 aa).

ATP-binding positions include glutamine 87, 105 to 109 (GEGKT), and aspartate 515. Zn(2+) contacts are provided by cysteine 916, cysteine 918, cysteine 927, and histidine 928.

Belongs to the SecA family. In terms of assembly, monomer and homodimer. Part of the essential Sec protein translocation apparatus which comprises SecA, SecYEG and auxiliary proteins SecDF-YajC and YidC. The cofactor is Zn(2+).

It is found in the cell inner membrane. Its subcellular location is the cytoplasm. The catalysed reaction is ATP + H2O + cellular proteinSide 1 = ADP + phosphate + cellular proteinSide 2.. Its function is as follows. Part of the Sec protein translocase complex. Interacts with the SecYEG preprotein conducting channel. Has a central role in coupling the hydrolysis of ATP to the transfer of proteins into and across the cell membrane, serving both as a receptor for the preprotein-SecB complex and as an ATP-driven molecular motor driving the stepwise translocation of polypeptide chains across the membrane. This is Protein translocase subunit SecA from Burkholderia orbicola (strain MC0-3).